A 239-amino-acid chain; its full sequence is Adapter protein MecA (239 aa).

The span at E118–G128 shows a compositional bias: basic and acidic residues. The disordered stretch occupies residues E118–R137.

Belongs to the MecA family. In terms of assembly, homodimer.

In terms of biological role, enables the recognition and targeting of unfolded and aggregated proteins to the ClpC protease or to other proteins involved in proteolysis. In Staphylococcus aureus (strain USA300), this protein is Adapter protein MecA.